The chain runs to 84 residues: U2-theraphotoxin-Cg1b 2 (84 aa).

The first 21 residues, 1–21 (MKVSVLITLAVLGVMFLLTSA), serve as a signal peptide directing secretion. The propeptide occupies 22–48 (EERGSDQMDSPAWLKSMEIIFQSEERE). 3 disulfide bridges follow: cysteine 49-cysteine 63, cysteine 56-cysteine 68, and cysteine 62-cysteine 76.

The protein belongs to the neurotoxin 10 (Hwtx-1) family. 06 (F4b) subfamily. Expressed by the venom gland.

The protein localises to the secreted. In terms of biological role, probable ion channel inhibitor. This is U2-theraphotoxin-Cg1b 2 from Chilobrachys guangxiensis (Chinese earth tiger tarantula).